Consider the following 456-residue polypeptide: Signal recognition particle 54 kDa protein (456 aa).

GTP contacts are provided by residues Gly104–Thr111, Asp184–Arg188, and Thr242–Asp245.

It belongs to the GTP-binding SRP family. SRP54 subfamily. In terms of assembly, part of the signal recognition particle protein translocation system, which is composed of SRP and FtsY. Archaeal SRP consists of a 7S RNA molecule of 300 nucleotides and two protein subunits: SRP54 and SRP19.

Its subcellular location is the cytoplasm. It catalyses the reaction GTP + H2O = GDP + phosphate + H(+). Involved in targeting and insertion of nascent membrane proteins into the cytoplasmic membrane. Binds to the hydrophobic signal sequence of the ribosome-nascent chain (RNC) as it emerges from the ribosomes. The SRP-RNC complex is then targeted to the cytoplasmic membrane where it interacts with the SRP receptor FtsY. The sequence is that of Signal recognition particle 54 kDa protein from Thermoplasma acidophilum (strain ATCC 25905 / DSM 1728 / JCM 9062 / NBRC 15155 / AMRC-C165).